The primary structure comprises 364 residues: Geissoschizine synthase (364 aa).

Positions 24–343 (GILHPIKFSR…DYLSTAMERI (320 aa)) constitute an Enoyl reductase (ER) domain. Cysteine 51 lines the Zn(2+) pocket. Asparagine 52 provides a ligand contact to NADP(+). Positions 73, 74, 104, 107, 110, 118, and 168 each coordinate Zn(2+). Leucine 194, glycine 196, leucine 197, serine 216, threonine 217, serine 218, lysine 221, arginine 261, valine 280, alanine 282, serine 304, threonine 306, and arginine 351 together coordinate NADP(+).

It belongs to the zinc-containing alcohol dehydrogenase family. Class-III subfamily. Homodimer. Zn(2+) serves as cofactor.

The catalysed reaction is (19E)-geissoschizine + NADP(+) = 4,21-dehydrogeissoschizine + NADPH. It catalyses the reaction (19E)-geissoschizine + NADPH + H(+) = (16R,19E)-isositsirikine + NADP(+). The enzyme catalyses (19E)-geissoschizine + NADPH + H(+) = (16R,19Z)-isositsirikine + NADP(+). It participates in alkaloid biosynthesis. An alcohol dehydrogenase involved in the biosynthesis of seco-iridoid and derivatives monoterpenoid indole alkaloids natural products. Catalyzes the production of geissoschizine and its conversion to (16R)-E-isositsirikine and (16R)-Z-isositsirikine. In Alstonia scholaris (Dogbane), this protein is Geissoschizine synthase.